Here is a 248-residue protein sequence, read N- to C-terminus: DNA repair protein RecO (248 aa).

This sequence belongs to the RecO family.

Involved in DNA repair and RecF pathway recombination. This Streptomyces griseus subsp. griseus (strain JCM 4626 / CBS 651.72 / NBRC 13350 / KCC S-0626 / ISP 5235) protein is DNA repair protein RecO.